Here is a 279-residue protein sequence, read N- to C-terminus: 3-methyl-2-oxobutanoate hydroxymethyltransferase (279 aa).

Mg(2+) is bound by residues aspartate 53 and aspartate 92. 3-methyl-2-oxobutanoate-binding positions include 53 to 54 (DS), aspartate 92, and lysine 122. A Mg(2+)-binding site is contributed by glutamate 124. Residue glutamate 191 is the Proton acceptor of the active site.

It belongs to the PanB family. As to quaternary structure, homodecamer; pentamer of dimers. Requires Mg(2+) as cofactor.

It is found in the cytoplasm. It catalyses the reaction 3-methyl-2-oxobutanoate + (6R)-5,10-methylene-5,6,7,8-tetrahydrofolate + H2O = 2-dehydropantoate + (6S)-5,6,7,8-tetrahydrofolate. Its pathway is cofactor biosynthesis; (R)-pantothenate biosynthesis; (R)-pantoate from 3-methyl-2-oxobutanoate: step 1/2. Its function is as follows. Catalyzes the reversible reaction in which hydroxymethyl group from 5,10-methylenetetrahydrofolate is transferred onto alpha-ketoisovalerate to form ketopantoate. This chain is 3-methyl-2-oxobutanoate hydroxymethyltransferase, found in Maricaulis maris (strain MCS10) (Caulobacter maris).